A 698-amino-acid polypeptide reads, in one-letter code: MSQEKKVFKTEWAGRSLTIETGQLAKQANGAVLVRYGDTVVLSTATASKEPRDGDFFPLTVNYEEKMYAAGKIPGGFKKREGRPGDDATLTARLIDRPIRPLFPKGYKHDVQIMNMVLSADPDCSPQMAAMIGSSMALSVSDIPFQGPIAGVNVGYIDGKYIINPTVEEKEVSRLDLEVAGHKDAVNMVEAGASEITEQEMLEAIFFGHEEIQRLVDFQQQIVDHIQPVKQEFIPVERDEALVERVKSLTEEKGLKETVLTFDKQQRDENLDNLKEEIVNEFIDEEDPENELLIKEVYAILNELVKEEVRRLIADEKIRPDGRKPDEIRPLDSEVGILPRTHGSGLFTRGQTQALSVLTLGALGDYQLIDGLGPEEEKRFMHHYNFPNFSVGETGPVRAPGRREIGHGALGERALKYIIPDTADFPYTIRIVSEVLESNGSSSQASICGSTLALMDAGVPIKAPVAGIAMGLVTREDSYTILTDIQGMEDALGDMDFKVAGTKEGITAIQMDIKIDGLTREIIEEALEQARRGRLEIMNHMLQTIDQPRTELSAYAPKVVTMTIKPDKIRDVIGPGGKKINEIIDETGVKLDIEQDGTIFIGAVDQAMINRAREIIEEITREAEVGQTYQATVKRIEKYGAFVGLFPGKDALLHISQISKNRIEKVEDVLKIGDTIEVKITEIDKQGRVNASHRALEE.

Positions 490 and 496 each coordinate Mg(2+). A KH domain is found at 557–616 (PKVVTMTIKPDKIRDVIGPGGKKINEIIDETGVKLDIEQDGTIFIGAVDQAMINRAREII). One can recognise an S1 motif domain in the interval 626-694 (GQTYQATVKR…KQGRVNASHR (69 aa)).

The protein belongs to the polyribonucleotide nucleotidyltransferase family. Mg(2+) serves as cofactor.

It is found in the cytoplasm. The enzyme catalyses RNA(n+1) + phosphate = RNA(n) + a ribonucleoside 5'-diphosphate. Functionally, involved in mRNA degradation. Catalyzes the phosphorolysis of single-stranded polyribonucleotides processively in the 3'- to 5'-direction. This chain is Polyribonucleotide nucleotidyltransferase, found in Staphylococcus aureus (strain MSSA476).